The primary structure comprises 86 residues: Serine protease inhibitor Kazal-type 2 (86 aa).

Positions 1–16 (MLRLVLLLLATDFAAS) are cleaved as a signal peptide. In terms of domain architecture, Kazal-like spans 32 to 86 (QFRTPDCHRFDYPVCSKHLSPVCGTDMNTYGNECTLCMKIREDGSHINIIKDEPC). 3 cysteine pairs are disulfide-bonded: Cys38–Cys68, Cys46–Cys65, and Cys54–Cys86.

It is found in the secreted. It localises to the cytoplasmic vesicle. The protein localises to the secretory vesicle. The protein resides in the acrosome. As a strong inhibitor of acrosin, it is required for normal spermiogenesis. It probably hinders premature activation of proacrosin and other proteases, thus preventing the cascade of events leading to spermiogenesis defects. May be involved in the regulation of serine protease-dependent germ cell apoptosis. It also inhibits trypsin. In Rattus norvegicus (Rat), this protein is Serine protease inhibitor Kazal-type 2 (Spink2).